We begin with the raw amino-acid sequence, 387 residues long: Phosphoglycerate kinase (387 aa).

Residues 21-23 (DLN), arginine 36, 60-63 (HLGR), arginine 114, and arginine 147 contribute to the substrate site. ATP-binding positions include lysine 198, glutamate 313, and 339-342 (GGDT).

Belongs to the phosphoglycerate kinase family. In terms of assembly, monomer.

The protein resides in the cytoplasm. The enzyme catalyses (2R)-3-phosphoglycerate + ATP = (2R)-3-phospho-glyceroyl phosphate + ADP. The protein operates within carbohydrate degradation; glycolysis; pyruvate from D-glyceraldehyde 3-phosphate: step 2/5. This chain is Phosphoglycerate kinase, found in Baumannia cicadellinicola subsp. Homalodisca coagulata.